The primary structure comprises 250 residues: Imidazole glycerol phosphate synthase subunit HisF (250 aa).

Active-site residues include aspartate 11 and aspartate 130.

The protein belongs to the HisA/HisF family. As to quaternary structure, heterodimer of HisH and HisF.

It is found in the cytoplasm. It catalyses the reaction 5-[(5-phospho-1-deoxy-D-ribulos-1-ylimino)methylamino]-1-(5-phospho-beta-D-ribosyl)imidazole-4-carboxamide + L-glutamine = D-erythro-1-(imidazol-4-yl)glycerol 3-phosphate + 5-amino-1-(5-phospho-beta-D-ribosyl)imidazole-4-carboxamide + L-glutamate + H(+). It functions in the pathway amino-acid biosynthesis; L-histidine biosynthesis; L-histidine from 5-phospho-alpha-D-ribose 1-diphosphate: step 5/9. Its function is as follows. IGPS catalyzes the conversion of PRFAR and glutamine to IGP, AICAR and glutamate. The HisF subunit catalyzes the cyclization activity that produces IGP and AICAR from PRFAR using the ammonia provided by the HisH subunit. This chain is Imidazole glycerol phosphate synthase subunit HisF, found in Bacteroides fragilis (strain YCH46).